The sequence spans 421 residues: Synaptotagmin-1 (421 aa).

The Vesicular portion of the chain corresponds to 1–57; the sequence is MVSASHPEALAAPVTTVATLVPHNATEPASPGEGKEDAFSKLKQKFMNELHKIPLPP. N-linked (GlcNAc...) asparagine glycosylation is present at Asn24. Residues 58-79 traverse the membrane as a helical segment; the sequence is WALIAIAIVAVLLVVTCCFCVC. 5 S-palmitoyl cysteine lipidation sites follow: Cys74, Cys75, Cys77, Cys79, and Cys82. The Cytoplasmic segment spans residues 80–421; the sequence is KKCLFKKKNK…EVDAMLAVKK (342 aa). The disordered stretch occupies residues 112–141; the sequence is TMKDQALKDDDAETGLTDGEEKEEPKEEEK. Residues 121 to 133 are compositionally biased toward acidic residues; the sequence is DDAETGLTDGEEK. Thr128 carries the phosphothreonine modification. A phospholipid binding region spans residues 135–381; sequence EPKEEEKLGK…AIGKVFVGYN (247 aa). In terms of domain architecture, C2 1 spans 141 to 260; the sequence is KLGKLQYSLD…DFGHVTEEWR (120 aa). Positions 171, 172, and 178 each coordinate Ca(2+). Residue Tyr229 is modified to Phosphotyrosine. 6 residues coordinate Ca(2+): Asp230, Phe231, Asp232, Ser235, Lys236, and Asp238. At Ser264 the chain carries Phosphoserine. The C2 2 domain occupies 272–405; that stretch reads KLGDICFSLR…NPRRPIAQWH (134 aa). Ca(2+) contacts are provided by Asp303 and Asp309. 2 positions are modified to phosphoserine: Ser342 and Ser344. Ca(2+) is bound by residues Asp363, Asp365, and Asp371.

This sequence belongs to the synaptotagmin family. Homotetramer. Heterodimer; heterodimerizes with SYT2 in presence of calcium. Interacts with SCAMP5. Interacts with STON2. Forms a complex with SV2B, syntaxin 1 and SNAP25. Interacts with SV2A, SV2B and SV2C. Interacts with RIMS1. Interacts with PRRT2. Interacts with DNAJC5 in a phosphorylation-dependent manner. Interacts (via N-terminus) with RAB3A. Interacts with SYT12. Interacts with calmodulin. Interacts with DNM1 (via C-terminal proline-rich domain (PRD)); this interaction facilitates vesicle fission during clathrin-mediated endocytosis (CME). As to quaternary structure, (Microbial infection) Interacts with C.botulinum neurotoxin type B (BoNT/B, botB). Has lower affinity for BoNT/B than Syt2; mutating its residues to match those in Syt2 increases its affinity. In terms of assembly, (Microbial infection) Interacts with C.botulinum neurotoxin type G (BoNT/G, botG). It depends on Ca(2+) as a cofactor. Glycosylated. Expressed in the brain (at protein level). Predominantly expressed in rostral, phylogenetically younger brain regions, and in some endocrine tissues.

It is found in the cytoplasmic vesicle. Its subcellular location is the secretory vesicle membrane. It localises to the secretory vesicle. The protein resides in the synaptic vesicle membrane. The protein localises to the chromaffin granule membrane. It is found in the cytoplasm. Its function is as follows. Calcium sensor that participates in triggering neurotransmitter release at the synapse. May have a regulatory role in the membrane interactions during trafficking of synaptic vesicles at the active zone of the synapse. It binds acidic phospholipids with a specificity that requires the presence of both an acidic head group and a diacyl backbone. A Ca(2+)-dependent interaction between synaptotagmin and putative receptors for activated protein kinase C has also been reported. It can bind to at least three additional proteins in a Ca(2+)-independent manner; these are neurexins, syntaxin and AP2. Plays a role in dendrite formation by melanocytes. In terms of biological role, (Microbial infection) Receptor for C.botulinum neurotoxin type B (BoNT/B, botB); interaction is improved in the presence of gangliosides. BoNT/B toxin binds to the membrane proximal vesicular domain of Syt1 (residues 32-51). (Microbial infection) Receptor for C.botulinum neurotoxin type G (BoNT/G, botG); unlike the case with BoNT/B, interaction is not improved in the presence of gangliosides. BoNT/G toxin binds to the vesicular domain of Syt1 (residues 32-53). This is Synaptotagmin-1 from Rattus norvegicus (Rat).